A 456-amino-acid polypeptide reads, in one-letter code: Adenylosuccinate synthetase (456 aa).

GTP-binding positions include 11–17 and 39–41; these read GDEGKGG and GHT. D12 serves as the catalytic Proton acceptor. D12 and G39 together coordinate Mg(2+). Residues 12 to 15, 37 to 40, T127, R141, Q232, T247, and R328 contribute to the IMP site; these read DEGK and NAGH. The active-site Proton donor is H40. A substrate-binding site is contributed by 324-330; it reads TVTGRPR. GTP is bound by residues R330, 356–358, and 441–443; these read HLD and GVG.

Belongs to the adenylosuccinate synthetase family. As to quaternary structure, homodimer. Mg(2+) serves as cofactor.

It localises to the cytoplasm. The enzyme catalyses IMP + L-aspartate + GTP = N(6)-(1,2-dicarboxyethyl)-AMP + GDP + phosphate + 2 H(+). Its pathway is purine metabolism; AMP biosynthesis via de novo pathway; AMP from IMP: step 1/2. Its function is as follows. Plays an important role in the de novo pathway of purine nucleotide biosynthesis. Catalyzes the first committed step in the biosynthesis of AMP from IMP. This chain is Adenylosuccinate synthetase, found in Natronomonas pharaonis (strain ATCC 35678 / DSM 2160 / CIP 103997 / JCM 8858 / NBRC 14720 / NCIMB 2260 / Gabara) (Halobacterium pharaonis).